The sequence spans 279 residues: Probable endonuclease 4 (279 aa).

The Zn(2+) site is built by histidine 69, histidine 109, glutamate 145, aspartate 179, histidine 182, histidine 216, aspartate 229, histidine 231, and glutamate 261.

Belongs to the AP endonuclease 2 family. It depends on Zn(2+) as a cofactor.

The enzyme catalyses Endonucleolytic cleavage to 5'-phosphooligonucleotide end-products.. Endonuclease IV plays a role in DNA repair. It cleaves phosphodiester bonds at apurinic or apyrimidinic (AP) sites, generating a 3'-hydroxyl group and a 5'-terminal sugar phosphate. In Tolumonas auensis (strain DSM 9187 / NBRC 110442 / TA 4), this protein is Probable endonuclease 4.